The primary structure comprises 497 residues: Thiamine transporter 1 (497 aa).

An N-acetylmethionine modification is found at methionine 1. Topologically, residues methionine 1–glutamate 28 are cytoplasmic. The helical transmembrane segment at cysteine 29–leucine 46 threads the bilayer. The Extracellular segment spans residues arginine 47 to glutamate 72. Asparagine 63 carries N-linked (GlcNAc...) asparagine glycosylation. Residues isoleucine 73–alanine 91 traverse the membrane as a helical segment. At threonine 92–proline 99 the chain is on the cytoplasmic side. The chain crosses the membrane as a helical span at residues valine 100–alanine 118. At glutamine 119–glutamate 128 the chain is on the extracellular side. A helical transmembrane segment spans residues phenylalanine 129 to valine 149. Residues aspartate 150–threonine 165 lie on the Cytoplasmic side of the membrane. A helical transmembrane segment spans residues leucine 166 to tryptophan 185. Topologically, residues serine 186–asparagine 191 are extracellular. The chain crosses the membrane as a helical span at residues valine 192 to leucine 208. Residues proline 209–aspartate 285 lie on the Cytoplasmic side of the membrane. Position 222 is a phosphoserine (serine 222). A helical membrane pass occupies residues phenylalanine 286 to phenylalanine 310. The Extracellular portion of the chain corresponds to glutamine 311–glutamate 337. A glycan (N-linked (GlcNAc...) asparagine) is linked at asparagine 314. Residues alanine 338–isoleucine 354 form a helical membrane-spanning segment. Topologically, residues lysine 355–glutamate 363 are cytoplasmic. A helical transmembrane segment spans residues methionine 364–methionine 380. At aspartate 381 to isoleucine 386 the chain is on the extracellular side. A helical transmembrane segment spans residues tryptophan 387–phenylalanine 409. At glutamine 410–arginine 419 the chain is on the cytoplasmic side. A helical transmembrane segment spans residues tyrosine 420–valine 443. The Extracellular portion of the chain corresponds to aspartate 444–glutamine 455. The chain crosses the membrane as a helical span at residues phenylalanine 456 to methionine 479. Residues lysine 480–serine 497 are Cytoplasmic-facing.

It belongs to the reduced folate carrier (RFC) transporter (TC 2.A.48) family. Interacts with TSPAN1; this interaction increases the stability of SLC19A2. Interacts with TMEM63B. Ubiquitous; most abundant in skeletal and cardiac muscle. Medium expression in placenta, heart, liver and kidney, low in lung.

The protein resides in the cell membrane. It carries out the reaction thiamine(out) + H(+)(in) = thiamine(in) + H(+)(out). The enzyme catalyses pyridoxine(out) + n H(+)(out) = pyridoxine(in) + n H(+)(in). Pyridoxine transport is inhibited by carbonyl cyanide p-trifluoromethoxyphenylhydrazone (FCCP) and carbonyl cyanide m-chlorophenylhydrazone (CCCP). High-affinity transporter for the intake of thiamine. Mediates H(+)-dependent pyridoxine transport. The protein is Thiamine transporter 1 (SLC19A2) of Homo sapiens (Human).